The following is an 82-amino-acid chain: Teratocyte protein CftICK-IV (82 aa).

The first 21 residues, 1-21 (MAKILLTFIILTCLIVTITPA), serve as a signal peptide directing secretion.

Post-translationally, contains 4 disulfide bonds. In terms of tissue distribution, abundantly expressed by teratocytes, which are extra-embryonic cells released by parasitoid wasps into their hosts during larval eclosion.

It is found in the secreted. Functionally, this endoparasitoid wasp peptide has immununosuppressive and insecticidal activities. Suppress cellular immunity which is detectable as a reduction of hemocyte spread index in the host. In vivo, ingestion of this peptide moderately reduces leaf consumption of D.saccharalis, a permissive host for the lepidoptere C.flavipes. This Cotesia flavipes (Parasitic wasp) protein is Teratocyte protein CftICK-IV.